Consider the following 239-residue polypeptide: 1-(5-phosphoribosyl)-5-[(5-phosphoribosylamino)methylideneamino] imidazole-4-carboxamide isomerase (239 aa).

D8 (proton acceptor) is an active-site residue. Residue D129 is the Proton donor of the active site.

It belongs to the HisA/HisF family.

Its subcellular location is the cytoplasm. The enzyme catalyses 1-(5-phospho-beta-D-ribosyl)-5-[(5-phospho-beta-D-ribosylamino)methylideneamino]imidazole-4-carboxamide = 5-[(5-phospho-1-deoxy-D-ribulos-1-ylimino)methylamino]-1-(5-phospho-beta-D-ribosyl)imidazole-4-carboxamide. It functions in the pathway amino-acid biosynthesis; L-histidine biosynthesis; L-histidine from 5-phospho-alpha-D-ribose 1-diphosphate: step 4/9. This chain is 1-(5-phosphoribosyl)-5-[(5-phosphoribosylamino)methylideneamino] imidazole-4-carboxamide isomerase, found in Bacillus cereus (strain ATCC 10987 / NRS 248).